The primary structure comprises 240 residues: Transcriptional regulatory protein rxt2 (240 aa).

This sequence belongs to the RXT2 family. In terms of assembly, component of the RPD3C(L) complex.

Its subcellular location is the nucleus. Functionally, component of the RPD3C(L) histone deacetylase complex (HDAC) responsible for the deacetylation of lysine residues on the N-terminal part of the core histones (H2A, H2B, H3 and H4). Histone deacetylation gives a tag for epigenetic repression and plays an important role in transcriptional regulation, cell cycle progression and developmental events. This chain is Transcriptional regulatory protein rxt2 (rtx2), found in Schizosaccharomyces pombe (strain 972 / ATCC 24843) (Fission yeast).